A 191-amino-acid polypeptide reads, in one-letter code: dITP/XTP pyrophosphatase (191 aa).

Residue 8 to 13 participates in substrate binding; it reads SKNQGK. Mg(2+) contacts are provided by glutamate 38 and aspartate 67. Residue aspartate 67 is the Proton acceptor of the active site. Substrate is bound by residues serine 68, 146 to 149, lysine 169, and 174 to 175; these read FGYD and HR.

Belongs to the HAM1 NTPase family. Homodimer. Mg(2+) is required as a cofactor.

The catalysed reaction is XTP + H2O = XMP + diphosphate + H(+). It carries out the reaction dITP + H2O = dIMP + diphosphate + H(+). The enzyme catalyses ITP + H2O = IMP + diphosphate + H(+). Functionally, pyrophosphatase that catalyzes the hydrolysis of nucleoside triphosphates to their monophosphate derivatives, with a high preference for the non-canonical purine nucleotides XTP (xanthosine triphosphate), dITP (deoxyinosine triphosphate) and ITP. Seems to function as a house-cleaning enzyme that removes non-canonical purine nucleotides from the nucleotide pool, thus preventing their incorporation into DNA/RNA and avoiding chromosomal lesions. This is dITP/XTP pyrophosphatase from Prochlorococcus marinus subsp. pastoris (strain CCMP1986 / NIES-2087 / MED4).